The following is a 249-amino-acid chain: Probable septum site-determining protein MinC (249 aa).

The disordered stretch occupies residues 117–138 (AVRPPQPPPPPHARAEPAAPVA).

The protein belongs to the MinC family. As to quaternary structure, interacts with MinD and FtsZ.

Cell division inhibitor that blocks the formation of polar Z ring septums. Rapidly oscillates between the poles of the cell to destabilize FtsZ filaments that have formed before they mature into polar Z rings. Prevents FtsZ polymerization. This chain is Probable septum site-determining protein MinC, found in Xanthomonas campestris pv. campestris (strain 8004).